A 226-amino-acid polypeptide reads, in one-letter code: Enolase-phosphatase E1 (226 aa).

It belongs to the HAD-like hydrolase superfamily. MasA/MtnC family. In terms of assembly, monomer. Mg(2+) serves as cofactor.

The enzyme catalyses 5-methylsulfanyl-2,3-dioxopentyl phosphate + H2O = 1,2-dihydroxy-5-(methylsulfanyl)pent-1-en-3-one + phosphate. It participates in amino-acid biosynthesis; L-methionine biosynthesis via salvage pathway; L-methionine from S-methyl-5-thio-alpha-D-ribose 1-phosphate: step 3/6. The protein operates within amino-acid biosynthesis; L-methionine biosynthesis via salvage pathway; L-methionine from S-methyl-5-thio-alpha-D-ribose 1-phosphate: step 4/6. Its function is as follows. Bifunctional enzyme that catalyzes the enolization of 2,3-diketo-5-methylthiopentyl-1-phosphate (DK-MTP-1-P) into the intermediate 2-hydroxy-3-keto-5-methylthiopentenyl-1-phosphate (HK-MTPenyl-1-P), which is then dephosphorylated to form the acireductone 1,2-dihydroxy-3-keto-5-methylthiopentene (DHK-MTPene). The chain is Enolase-phosphatase E1 from Shewanella putrefaciens (strain CN-32 / ATCC BAA-453).